The primary structure comprises 186 residues: Elongation factor P (186 aa).

Belongs to the elongation factor P family.

It localises to the cytoplasm. Its pathway is protein biosynthesis; polypeptide chain elongation. Involved in peptide bond synthesis. Stimulates efficient translation and peptide-bond synthesis on native or reconstituted 70S ribosomes in vitro. Probably functions indirectly by altering the affinity of the ribosome for aminoacyl-tRNA, thus increasing their reactivity as acceptors for peptidyl transferase. This chain is Elongation factor P, found in Cupriavidus necator (strain ATCC 17699 / DSM 428 / KCTC 22496 / NCIMB 10442 / H16 / Stanier 337) (Ralstonia eutropha).